The primary structure comprises 180 residues: Putative manganese efflux pump MntP (180 aa).

The next 6 helical transmembrane spans lie at 4–24 (FVTICIMAAALGMDAFSVALG), 40–60 (LTIGLFHVAMPLAGMAVGKWL), 64–84 (FDVIATYIGGGLLLVIGVQMA), 103–123 (LLLFAVGVSLDSFSAGLSFGI), 129–149 (FVTVGMIGAMSMVMSWIGLIV), and 156–176 (FLGAYGELLGGLVLIGFGLKI).

Belongs to the MntP (TC 9.B.29) family.

It localises to the cell membrane. Probably functions as a manganese efflux pump. This chain is Putative manganese efflux pump MntP, found in Shouchella clausii (strain KSM-K16) (Alkalihalobacillus clausii).